Reading from the N-terminus, the 461-residue chain is Deoxyhypusine synthase (461 aa).

Residues 166–167 (EH), glutamate 331, histidine 377, 403–405 (GSD), and 412–418 (EAVSWGK) each bind spermidine. Lysine 418 acts as the Nucleophile in catalysis. The chain crosses the membrane as a helical span at residues 428 to 448 (VYSEVTIVFPLIVVHVFVAWV).

The protein belongs to the deoxyhypusine synthase family. In terms of assembly, heterotetramer formed by a homodimer of the non-catalytic regulatory subunit DHSp and a homodimer of the catalytic subunit DHSc where DHSc appears to bind spermidine and DHSp appears to bind NAD(+). NAD(+) serves as cofactor.

It is found in the membrane. It carries out the reaction [eIF5A protein]-L-lysine + spermidine = [eIF5A protein]-deoxyhypusine + propane-1,3-diamine. It functions in the pathway protein modification; eIF5A hypusination. Its activity is regulated as follows. Allosterically activated by DHSp. Inhibited by spermididine analog N1-guanyl-1,7-diamineoheptane (GC7). Functionally, in association with the non-catalytic regulatory subunit DHSp, catalyzes the NAD-dependent oxidative cleavage of spermidine and the subsequent transfer of the butylamine moiety of spermidine to the epsilon-amino group of a specific lysine residue of the eIF5A precursor protein to form the intermediate deoxyhypusine residue. Regulates protein levels of its regulatory subunit DHSp. Required for cell growth and survival. In Trypanosoma brucei brucei (strain 927/4 GUTat10.1), this protein is Deoxyhypusine synthase.